A 285-amino-acid chain; its full sequence is NADH-dependent oxidoreductase ucdB (285 aa).

NAD(+) is bound at residue threonine 87. Residue lysine 156 is part of the active site.

This sequence belongs to the HIBADH-related family. NP60 subfamily.

It functions in the pathway secondary metabolite biosynthesis. Its function is as follows. Nonribosomal peptide synthetase that mediates the biosynthesis of usterphenyllins and uscandidusins, p-terphenyl derivatives. Within the pathway, ucdB alone catalyzes both reduction and dehydration of atromentin to form a terphenyl triol intermediate. The pathway begin with the biosynthesis of 4-hydroxyphenylpyruvate (HPPA) from L-tyrosine, possibly by the aminotransferase ucdG. The nonribosomal peptide synthetase ucdA then condenses two HPPA units to produce atromentin. The key step in this pathway is the reduction and dehydration of atromentin to form a terphenyl triol intermediate, performed by the NAD-dependent dehydrogenase ucdB. Further O-methylation by the methyltransferase ucdC forms terphenyllin carrying two methoxy moieties at C-9 and C-12, and subsequent dihydroxylation at C-3 of ring A and C-15 of ring C by the flavin-dependent oxygenase ucdD leads to 3,15-dihydroxyterphenyllin. Prenylation by ucdE at position C-5 of ring A forms usterphenyllin B, and is followed by a second prenylation at position C-14 of ring C to form usterphenyllin A. The following furan ring formation that leads to uscandidusins A and B was proven to be an unexpected spontaneous non-enzymatic reaction. The polypeptide is NADH-dependent oxidoreductase ucdB (Aspergillus ustus).